Here is a 182-residue protein sequence, read N- to C-terminus: Adenine phosphoribosyltransferase (182 aa).

Belongs to the purine/pyrimidine phosphoribosyltransferase family. In terms of assembly, homodimer.

The protein resides in the cytoplasm. The enzyme catalyses AMP + diphosphate = 5-phospho-alpha-D-ribose 1-diphosphate + adenine. It functions in the pathway purine metabolism; AMP biosynthesis via salvage pathway; AMP from adenine: step 1/1. Its function is as follows. Catalyzes a salvage reaction resulting in the formation of AMP, that is energically less costly than de novo synthesis. The polypeptide is Adenine phosphoribosyltransferase (Pseudomonas syringae pv. tomato (strain ATCC BAA-871 / DC3000)).